Reading from the N-terminus, the 177-residue chain is Probable adenylyl-sulfate kinase (177 aa).

ATP is bound at residue 12-19 (GLSGAGKT). The active-site Phosphoserine intermediate is the S86.

This sequence belongs to the APS kinase family.

It carries out the reaction adenosine 5'-phosphosulfate + ATP = 3'-phosphoadenylyl sulfate + ADP + H(+). It functions in the pathway sulfur metabolism; hydrogen sulfide biosynthesis; sulfite from sulfate: step 2/3. Functionally, catalyzes the synthesis of activated sulfate. In Synechocystis sp. (strain ATCC 27184 / PCC 6803 / Kazusa), this protein is Probable adenylyl-sulfate kinase (cysC).